The sequence spans 446 residues: Tubulin alpha-2 chain (446 aa).

An MREC motif motif is present at residues 1–4 (MREC). The GTP site is built by Gln-11, Glu-68, Ser-137, Gly-141, Thr-142, Ser-176, Asn-203, and Asn-225. Residue Glu-68 participates in Mg(2+) binding. The active site involves Glu-251.

The protein belongs to the tubulin family. As to quaternary structure, dimer of alpha and beta chains. A typical microtubule is a hollow water-filled tube with an outer diameter of 25 nm and an inner diameter of 15 nM. Alpha-beta heterodimers associate head-to-tail to form protofilaments running lengthwise along the microtubule wall with the beta-tubulin subunit facing the microtubule plus end conferring a structural polarity. Microtubules usually have 13 protofilaments but different protofilament numbers can be found in some organisms and specialized cells. The cofactor is Mg(2+). Some glutamate residues at the C-terminus are polyglycylated, resulting in polyglycine chains on the gamma-carboxyl group. Glycylation is mainly limited to tubulin incorporated into axonemes (cilia and flagella) whereas glutamylation is prevalent in neuronal cells, centrioles, axonemes, and the mitotic spindle. Both modifications can coexist on the same protein on adjacent residues, and lowering polyglycylation levels increases polyglutamylation, and reciprocally. The precise function of polyglycylation is still unclear. Post-translationally, some glutamate residues at the C-terminus are polyglutamylated, resulting in polyglutamate chains on the gamma-carboxyl group. Polyglutamylation plays a key role in microtubule severing by spastin (SPAST). SPAST preferentially recognizes and acts on microtubules decorated with short polyglutamate tails: severing activity by SPAST increases as the number of glutamates per tubulin rises from one to eight, but decreases beyond this glutamylation threshold. As to expression, testis specific.

The protein localises to the cytoplasm. It is found in the cytoskeleton. It catalyses the reaction GTP + H2O = GDP + phosphate + H(+). In terms of biological role, tubulin is the major constituent of microtubules, a cylinder consisting of laterally associated linear protofilaments composed of alpha- and beta-tubulin heterodimers. Microtubules grow by the addition of GTP-tubulin dimers to the microtubule end, where a stabilizing cap forms. Below the cap, tubulin dimers are in GDP-bound state, owing to GTPase activity of alpha-tubulin. This is Tubulin alpha-2 chain from Gallus gallus (Chicken).